Consider the following 287-residue polypeptide: Very long chain fatty acid elongase 4 (287 aa).

The next 3 helical transmembrane spans lie at I33–M53, P64–V84, and F115–V135. Residues H145–H149 carry the HxxHH motif motif. The active-site Nucleophile is H148. 4 helical membrane-spanning segments follow: residues L150–F170, T172–M192, I199–L219, and L241–Y261.

This sequence belongs to the ELO family.

It localises to the membrane. The enzyme catalyses a very-long-chain acyl-CoA + malonyl-CoA + H(+) = a very-long-chain 3-oxoacyl-CoA + CO2 + CoA. Functionally, involved in the synthesis of fatty acids. Elongates C16:0 and C18:0 fatty acids to C26:0, with C24:0 being the main product. This is Very long chain fatty acid elongase 4 from Trypanosoma cruzi (strain CL Brener).